A 416-amino-acid polypeptide reads, in one-letter code: Squalene synthase (416 aa).

R52 and R77 together coordinate NADP(+). Positions 80, 83, and 84 each coordinate Mg(2+). Position 218 (R218) interacts with NADP(+). The helical transmembrane segment at 284–304 threads the bilayer; that stretch reads SVFNFCAIPQVMAIATLAACY. K315 and R317 together coordinate NADP(+). A helical transmembrane segment spans residues 384 to 404; sequence PIYLSFIMLLAALSWQYLSTL.

It belongs to the phytoene/squalene synthase family. It depends on Mg(2+) as a cofactor.

The protein resides in the endoplasmic reticulum membrane. The catalysed reaction is 2 (2E,6E)-farnesyl diphosphate + NADPH + H(+) = squalene + 2 diphosphate + NADP(+). It carries out the reaction 2 (2E,6E)-farnesyl diphosphate + NADH + H(+) = squalene + 2 diphosphate + NAD(+). The enzyme catalyses presqualene diphosphate + NADH + H(+) = squalene + diphosphate + NAD(+). It catalyses the reaction presqualene diphosphate + NADPH + H(+) = squalene + diphosphate + NADP(+). The catalysed reaction is 2 (2E,6E)-farnesyl diphosphate = presqualene diphosphate + diphosphate. It functions in the pathway terpene metabolism; lanosterol biosynthesis; lanosterol from farnesyl diphosphate: step 1/3. Functionally, catalyzes the condensation of 2 farnesyl pyrophosphate (FPP) moieties to form squalene. Proceeds in two distinct steps. In the first half-reaction, two molecules of FPP react to form the stable presqualene diphosphate intermediate (PSQPP), with concomitant release of a proton and a molecule of inorganic diphosphate. In the second half-reaction, PSQPP undergoes heterolysis, isomerization, and reduction with NADPH or NADH to form squalene. It is the first committed enzyme of the sterol biosynthesis pathway. The polypeptide is Squalene synthase (Fdft1) (Mus musculus (Mouse)).